A 324-amino-acid chain; its full sequence is Olfactory receptor 52I1 (324 aa).

Residues 1–29 (MLGPAYNHTMETPASFLLVGIPGLQSSHL) are Extracellular-facing. N-linked (GlcNAc...) asparagine glycosylation is present at asparagine 7. The helical transmembrane segment at 30 to 50 (WLAISLSAMYITALLGNTLIV) threads the bilayer. The Cytoplasmic segment spans residues 51–58 (TAIWMDST). Residues 59 to 79 (RHEPMYCFLCVLAAVDIVMAS) form a helical membrane-spanning segment. Topologically, residues 80-103 (SVVPKMVSIFCSGDSSISFSACFT) are extracellular. Residues cysteine 101 and cysteine 193 are joined by a disulfide bond. The helical transmembrane segment at 104-124 (QMFFVHLATAVETGLLLTMAF) threads the bilayer. At 125–143 (DRYVAICKPLHYKRILTPQ) the chain is on the cytoplasmic side. The chain crosses the membrane as a helical span at residues 144-164 (VMLGMSMAVTIRAVTFMTPLS). Over 165–200 (WMMNHLPFCGSNVVVHSYCKHIALARLACADPVPSS) the chain is Extracellular. Residues 201 to 221 (LYSLIGSSLMVGSDVAFIAAS) form a helical membrane-spanning segment. The Cytoplasmic segment spans residues 222–241 (YILILRAVFDLSSKTAQLKA). Residues 242–262 (LSTCGSHVGVMALYYLPGMAS) traverse the membrane as a helical segment. Topologically, residues 263–278 (IYAAWLGQDIVPLHTQ) are extracellular. A helical transmembrane segment spans residues 279–299 (VLLADLYVIIPATLNPIIYGM). The Cytoplasmic segment spans residues 300–324 (RTKQLLEGIWSYLMHFLFDHSNLGS).

This sequence belongs to the G-protein coupled receptor 1 family.

The protein resides in the cell membrane. Functionally, odorant receptor. In Homo sapiens (Human), this protein is Olfactory receptor 52I1 (OR52I1).